We begin with the raw amino-acid sequence, 342 residues long: N-acetyl-gamma-glutamyl-phosphate reductase (342 aa).

Cys149 is an active-site residue.

Belongs to the NAGSA dehydrogenase family. Type 1 subfamily.

Its subcellular location is the cytoplasm. The enzyme catalyses N-acetyl-L-glutamate 5-semialdehyde + phosphate + NADP(+) = N-acetyl-L-glutamyl 5-phosphate + NADPH + H(+). It participates in amino-acid biosynthesis; L-arginine biosynthesis; N(2)-acetyl-L-ornithine from L-glutamate: step 3/4. Functionally, catalyzes the NADPH-dependent reduction of N-acetyl-5-glutamyl phosphate to yield N-acetyl-L-glutamate 5-semialdehyde. This chain is N-acetyl-gamma-glutamyl-phosphate reductase, found in Nitrosospira multiformis (strain ATCC 25196 / NCIMB 11849 / C 71).